The following is a 400-amino-acid chain: Elongation factor Tu (400 aa).

The region spanning 10–210 is the tr-type G domain; that stretch reads KPHCNVGTIG…VDTYIPIPPR (201 aa). The tract at residues 19 to 26 is G1; it reads GHVDHGKT. 19 to 26 is a GTP binding site; it reads GHVDHGKT. T26 contributes to the Mg(2+) binding site. A G2 region spans residues 60-64; sequence GLTIA. The interval 81-84 is G3; that stretch reads DCPG. GTP-binding positions include 81–85 and 136–139; these read DCPGH and NKCD. Positions 136–139 are G4; the sequence is NKCD. The interval 174 to 176 is G5; the sequence is SAI.

It belongs to the TRAFAC class translation factor GTPase superfamily. Classic translation factor GTPase family. EF-Tu/EF-1A subfamily. Monomer.

It localises to the cytoplasm. It catalyses the reaction GTP + H2O = GDP + phosphate + H(+). GTP hydrolase that promotes the GTP-dependent binding of aminoacyl-tRNA to the A-site of ribosomes during protein biosynthesis. The sequence is that of Elongation factor Tu from Dehalococcoides mccartyi (strain CBDB1).